The chain runs to 454 residues: Divalent metal cation transporter MntH (454 aa).

Positions 1 to 21 are disordered; the sequence is MSDAEATAPRSSWRFAGRDED. The next 11 helical transmembrane spans lie at 45-65, 78-98, 122-142, 153-173, 182-202, 220-240, 275-295, 312-332, 368-388, 389-409, and 426-446; these read LFAF…PGNW, TLLF…ALAA, FVLW…EVIG, IPLI…LLLM, AFVI…IFVA, IVTN…TVMP, IALM…AVAF, LLSP…ALLA, GLAI…GTGQ, LLVF…VPLV, and GVAA…FKLL.

It belongs to the NRAMP family.

The protein resides in the cell inner membrane. Its function is as follows. H(+)-stimulated, divalent metal cation uptake system. This is Divalent metal cation transporter MntH from Mesorhizobium japonicum (strain LMG 29417 / CECT 9101 / MAFF 303099) (Mesorhizobium loti (strain MAFF 303099)).